The primary structure comprises 48 residues: Large ribosomal subunit protein eL40 (48 aa).

This sequence belongs to the eukaryotic ribosomal protein eL40 family.

The sequence is that of Large ribosomal subunit protein eL40 from Methanoculleus marisnigri (strain ATCC 35101 / DSM 1498 / JR1).